The sequence spans 941 residues: MHHKVNVKTQREVHFPMDLLQACGASAPRPVARVSRATDLDRRYRCVLSLPEERARSVGCKWSSTRAALRRGLEELGSREFRRRLRLADDCWRAICAAVCTGRKFPSFSVTDRPARARLAKVYRMGRRLLVGVVCRGESVVSDLKQECADLRRVIFEGSTRIPSSSLWGLVGVLGWTSPERAMQLTFIGRALPYGSPDVERRALASHAATLSIPAECHPNYLVAAEQFAKSWADDNLPRKFRIYPIAVQESSCMEYSRAQGGLLQSFRKGFVGYDPAAPSADPDDLELAKERGFSRIRASWYSTFRYRGELKSTNQSLEARVAVVPERGFKARIVTTHSASRVTFGHQFRRYLLQGIRRHPALVDVIGGDHRRAVETMDGDFGLLRPDGRLLSADLTSASDRIPHDLVKAILRGIFSDPDRRPPGTSLADVFDLVLGPYHLHYPDGSEVTVRQGILMGLPTTWPLLCLIHLFWVELSDWAPARPNHSRGFVLGESFRICGDDLIAWWRPERIALYNQIAVDCGAQFSAGKHLESKTWGIFTEKVFTVKPVKMKVRVRSEPSLKGYVFSRSSAFSCRMGGKGITGIRAARLYTIGAMPRWSRRIRDVYPGSLEHRTASQRYGEPVTVYRFGRWSSAIPLRWAVRAPTRTVGNPVQSLPDWFTVGPAASSVAADSNAFGAVSRVLRRMFPGLPRKLASAGIPPYLPRVFGGGGLVKSTGLTTKIGAVASRRWMSRIGHDLYRSRERKSTLGRVWTLSTSPAYAASLHEVEKFMDRPDIILTRKCRNPMLKHARELGLFEEVFESRVGGGILWASLNGKALVESHSPSILQVSRNLRRSLACPSGGFLRPSAPIGKLVQRHTLPRGTVWFLESSATDSARQGGMGLPPPPPPPLGGGGMAGPPPPPFMGLRPESSVPTSVPFTPSMFSERLAALESLFGRPPPS.

The segment at Ser875–Pro918 is disordered. Residues Met905–Pro918 show a composition bias toward low complexity.

Forms a ribonucleoprotein complex with the 23S RNA, where a single polymerase molecule binds to a single viral RNA genome. Since the viral RNA is not encapsidated, ribonucleoprotein complex formation appears to be the strategy to survive in the host as persistent virus.

It is found in the host cytoplasm. It carries out the reaction RNA(n) + a ribonucleoside 5'-triphosphate = RNA(n+1) + diphosphate. In terms of biological role, RNA-directed RNA polymerase that replicates the viral (+) and (-) genome. In Saccharomyces 23S RNA narnavirus (ScNV-23S), this protein is RNA-directed RNA polymerase.